Reading from the N-terminus, the 41-residue chain is Large ribosomal subunit protein bL36 (41 aa).

It belongs to the bacterial ribosomal protein bL36 family.

This is Large ribosomal subunit protein bL36 from Dinoroseobacter shibae (strain DSM 16493 / NCIMB 14021 / DFL 12).